Consider the following 196-residue polypeptide: ATP-dependent Clp protease proteolytic subunit (196 aa).

Ser-101 acts as the Nucleophile in catalysis. His-126 is an active-site residue.

Belongs to the peptidase S14 family. As to quaternary structure, component of the chloroplastic Clp protease core complex.

It localises to the plastid. The protein resides in the chloroplast stroma. The enzyme catalyses Hydrolysis of proteins to small peptides in the presence of ATP and magnesium. alpha-casein is the usual test substrate. In the absence of ATP, only oligopeptides shorter than five residues are hydrolyzed (such as succinyl-Leu-Tyr-|-NHMec, and Leu-Tyr-Leu-|-Tyr-Trp, in which cleavage of the -Tyr-|-Leu- and -Tyr-|-Trp bonds also occurs).. Functionally, cleaves peptides in various proteins in a process that requires ATP hydrolysis. Has a chymotrypsin-like activity. Plays a major role in the degradation of misfolded proteins. This is ATP-dependent Clp protease proteolytic subunit from Aethionema cordifolium (Lebanon stonecress).